The following is a 1064-amino-acid chain: Probable ATP-dependent DNA helicase CHR23 (1064 aa).

Residues 398-563 (VSLYNNDYNG…WSLLNFLLPH (166 aa)) enclose the Helicase ATP-binding domain. 411–418 (DEMGLGKT) contacts ATP. The short motif at 513–516 (DEGH) is the DEAH box element. Positions 699–866 (LLDRLLPKLK…DRREMLEEIM (168 aa)) constitute a Helicase C-terminal domain. Disordered stretches follow at residues 924–955 (AYTSETQEDKTNAKNHFGSLTGKRKRKEAVYS) and 967–1064 (MESE…SKRN). Residues 1002–1014 (ESDEEKEEEEEER) are compositionally biased toward acidic residues. Low complexity predominate over residues 1048 to 1064 (SSPNSRGKGSSKGSKRN).

This sequence belongs to the helicase family. Expressed in embryos, root apical meristem (RAM) and shoot apical meristem (SAM).

The protein resides in the nucleus. The catalysed reaction is ATP + H2O = ADP + phosphate + H(+). Functionally, probable chromatin-remodeling factor that is functionally redundant with CHR12 in root and shoot stem cell initiation and root apical meristem (RAM) and shoot apical meristem (SAM) maintenance. Can associate with the promoter region of WOX5. May promote seed maturation and repress initiation of germination. May repress plant growth. This is Probable ATP-dependent DNA helicase CHR23 from Arabidopsis thaliana (Mouse-ear cress).